The sequence spans 134 residues: Putative oxidoreductase CatD (134 aa).

4 helical membrane-spanning segments follow: residues 5-25, 46-66, 70-90, and 91-111; these read FEIG…VHGL, FMAY…FFGL, IVGV…KLKA, and PFMG…HLAL.

The protein belongs to the DoxX family.

It localises to the cell membrane. Essential for growth and viability in the presence of catechol and probably involved in the detoxification of catechol. The sequence is that of Putative oxidoreductase CatD (catD) from Bacillus subtilis (strain 168).